The chain runs to 494 residues: MNAPVKPSKLIKGATGDWEVVIGLEVHAQVASNAKLFSGASTEFGGAPNAHVSLVDAAMPGMLPVINEECVAQAVRTGLGLNAQINLRSVFDRKNYFYPDLPQGYQISQYKSPVVGEGVVEVDLPDGEGISVGIERLHLEQDAGKLLHDQHPTSTFVDLNRSGVALMEIVSKPDIRSSEQAKAYVSKLRTILRYLGTCDGDMEKGSLRADVNVSVRKPGGPLGTRCEIKNVNSIRFIGQAIEYEARRQIGILEDGGAIVQETRLFDAGKGETRSMRSKEEAHDYRYFPDPDLLPLEFSQDYVDALKAKLPELPDAKKARFMAEFGLSLEDAGVLVAERESAEFYEAVLAALGNQPRDGKLAANWVINELFGRLNKEGRDIAASPVSAAQLATIVELIGEGTISGKIAKDLFEIVWCEGGDPRELVETRGMKQVTDLGAIEKVVDDIIQANPDKVAQAQAKPALMGWFVGQVMKSSGGKANPQSVNDLLKSKLGL.

The protein belongs to the GatB/GatE family. GatB subfamily. As to quaternary structure, heterotrimer of A, B and C subunits.

The catalysed reaction is L-glutamyl-tRNA(Gln) + L-glutamine + ATP + H2O = L-glutaminyl-tRNA(Gln) + L-glutamate + ADP + phosphate + H(+). It carries out the reaction L-aspartyl-tRNA(Asn) + L-glutamine + ATP + H2O = L-asparaginyl-tRNA(Asn) + L-glutamate + ADP + phosphate + 2 H(+). Its function is as follows. Allows the formation of correctly charged Asn-tRNA(Asn) or Gln-tRNA(Gln) through the transamidation of misacylated Asp-tRNA(Asn) or Glu-tRNA(Gln) in organisms which lack either or both of asparaginyl-tRNA or glutaminyl-tRNA synthetases. The reaction takes place in the presence of glutamine and ATP through an activated phospho-Asp-tRNA(Asn) or phospho-Glu-tRNA(Gln). The sequence is that of Aspartyl/glutamyl-tRNA(Asn/Gln) amidotransferase subunit B from Rhodopseudomonas palustris (strain BisA53).